The sequence spans 572 residues: Putative two-component response regulator ARR13 (572 aa).

In terms of domain architecture, Response regulatory spans 17-134 (NVMVVDDNRV…DLPKIYQFAL (118 aa)). D71 carries the 4-aspartylphosphate modification. The segment at 175-225 (KKNCSSKSDTRTVNSTNVSHVSTNGSRKNRKRKPKGGPSDDGESLSQPPKK) is disordered. Residues 179 to 197 (SSKSDTRTVNSTNVSHVST) are compositionally biased toward polar residues. Positions 224 to 227 (KKKK) match the Nuclear localization signal motif. The myb-like GARP DNA-binding region spans 227–277 (KIWWTNPLQDLFLQAIQHIGYDKVVPKKILAIMNVPYLTRENVASHLQKYR). Over residues 509 to 522 (NQDQSNGESSNTIA) the composition is skewed to polar residues. The disordered stretch occupies residues 509–531 (NQDQSNGESSNTIATPETNTPNF).

It belongs to the ARR family. Type-B subfamily. In terms of assembly, binds the target DNA as a monomer. Post-translationally, two-component system major event consists of a His-to-Asp phosphorelay between a sensor histidine kinase (HK) and a response regulator (RR). In plants, the His-to-Asp phosphorelay involves an additional intermediate named Histidine-containing phosphotransfer protein (HPt). This multistep phosphorelay consists of a His-Asp-His-Asp sequential transfer of a phosphate group between first a His and an Asp of the HK protein, followed by the transfer to a conserved His of the HPt protein and finally the transfer to an Asp in the receiver domain of the RR protein.

The protein resides in the nucleus. In terms of biological role, putative transcriptional activator that binds specifically to the DNA sequence 5'-[AG]GATT-3'. Functions as a response regulator involved in His-to-Asp phosphorelay signal transduction system. Phosphorylation of the Asp residue in the receiver domain activates the ability of the protein to promote the transcription of target genes. Could directly activate some type-A response regulators in response to cytokinins. The protein is Putative two-component response regulator ARR13 (ARR13) of Arabidopsis thaliana (Mouse-ear cress).